Here is a 262-residue protein sequence, read N- to C-terminus: MRYQNMFETLKKQDKMAFIPFVTLGDPNYEWSFEIIKTLIDSGVSALELGFAFSDPVADGVTIQASHLRALKHASMAKNFQLLRALRDYNPHIPIGLLAYANLIFSYGVDGFYAQIKECGVDSVLIADMPLIEKELVIKSAQKHQIKQIFIASPNASVKDLEQVATHSQGYIYTLARSGVTGASHTLKNDASAIIKTLKTFSSTPALLGFGISKKEHITNAKGMGADGVICGSALVKIIEENLNNENAMLEKIKGFIGGMIF.

Active-site proton acceptor residues include E48 and D59.

It belongs to the TrpA family. Tetramer of two alpha and two beta chains.

The enzyme catalyses (1S,2R)-1-C-(indol-3-yl)glycerol 3-phosphate + L-serine = D-glyceraldehyde 3-phosphate + L-tryptophan + H2O. Its pathway is amino-acid biosynthesis; L-tryptophan biosynthesis; L-tryptophan from chorismate: step 5/5. The alpha subunit is responsible for the aldol cleavage of indoleglycerol phosphate to indole and glyceraldehyde 3-phosphate. The polypeptide is Tryptophan synthase alpha chain (Helicobacter pylori (strain HPAG1)).